The chain runs to 482 residues: Aspartyl/glutamyl-tRNA(Asn/Gln) amidotransferase subunit B (482 aa).

This sequence belongs to the GatB/GatE family. GatB subfamily. Heterotrimer of A, B and C subunits.

It catalyses the reaction L-glutamyl-tRNA(Gln) + L-glutamine + ATP + H2O = L-glutaminyl-tRNA(Gln) + L-glutamate + ADP + phosphate + H(+). It carries out the reaction L-aspartyl-tRNA(Asn) + L-glutamine + ATP + H2O = L-asparaginyl-tRNA(Asn) + L-glutamate + ADP + phosphate + 2 H(+). Allows the formation of correctly charged Asn-tRNA(Asn) or Gln-tRNA(Gln) through the transamidation of misacylated Asp-tRNA(Asn) or Glu-tRNA(Gln) in organisms which lack either or both of asparaginyl-tRNA or glutaminyl-tRNA synthetases. The reaction takes place in the presence of glutamine and ATP through an activated phospho-Asp-tRNA(Asn) or phospho-Glu-tRNA(Gln). The chain is Aspartyl/glutamyl-tRNA(Asn/Gln) amidotransferase subunit B from Thermotoga neapolitana (strain ATCC 49049 / DSM 4359 / NBRC 107923 / NS-E).